Reading from the N-terminus, the 591-residue chain is Aspartate--tRNA(Asp/Asn) ligase (591 aa).

L-aspartate is bound at residue E175. The interval 199–202 (QQYK) is aspartate. The L-aspartate site is built by R221 and H450. 221–223 (RDE) contributes to the ATP binding site. An ATP-binding site is contributed by E484. R491 provides a ligand contact to L-aspartate. 536-539 (GVDR) contributes to the ATP binding site.

This sequence belongs to the class-II aminoacyl-tRNA synthetase family. Type 1 subfamily. As to quaternary structure, homodimer.

Its subcellular location is the cytoplasm. It catalyses the reaction tRNA(Asx) + L-aspartate + ATP = L-aspartyl-tRNA(Asx) + AMP + diphosphate. Aspartyl-tRNA synthetase with relaxed tRNA specificity since it is able to aspartylate not only its cognate tRNA(Asp) but also tRNA(Asn). Reaction proceeds in two steps: L-aspartate is first activated by ATP to form Asp-AMP and then transferred to the acceptor end of tRNA(Asp/Asn). The protein is Aspartate--tRNA(Asp/Asn) ligase of Rhodopseudomonas palustris (strain ATCC BAA-98 / CGA009).